The sequence spans 193 residues: Superoxide dismutase [Fe] (193 aa).

Fe cation is bound by residues His27, His74, Asp157, and His161.

This sequence belongs to the iron/manganese superoxide dismutase family. As to quaternary structure, homodimer. The cofactor is Fe cation.

It carries out the reaction 2 superoxide + 2 H(+) = H2O2 + O2. In terms of biological role, destroys superoxide anion radicals which are normally produced within the cells and which are toxic to biological systems. This chain is Superoxide dismutase [Fe] (sodB), found in Salmonella typhimurium (strain LT2 / SGSC1412 / ATCC 700720).